Here is a 1208-residue protein sequence, read N- to C-terminus: Neural cell adhesion molecule L1-like protein (1208 aa).

Positions 1–24 (MEPLLLGRGLIVYLMFLLLKFSKA) are cleaved as a signal peptide. The Extracellular segment spans residues 25-1082 (IEIPSSVQQV…LYDDISTQGW (1058 aa)). Ig-like C2-type domains are found at residues 35–124 (PTII…EEIE) and 128–223 (PSVP…MKLT). 2 disulfides stabilise this stretch: Cys-57-Cys-109 and Cys-153-Cys-204. Lys-231 and Asn-299 each carry an N-linked (GlcNAc...) asparagine glycan. Ig-like C2-type domains lie at 235–328 (PKLL…VIVE), 331–417 (PRWT…ANID), 423–510 (PLIQ…ANLD), and 515–607 (TKLR…TQVT). 4 disulfide bridges follow: Cys-262-Cys-310, Cys-352-Cys-401, Cys-445-Cys-494, and Cys-536-Cys-591. N-linked (GlcNAc...) asparagine glycans are attached at residues Asn-476 and Asn-482. The DGEA signature appears at 555–558 (DGEA). N-linked (GlcNAc...) asparagine glycans are attached at residues Asn-562 and Asn-580. Fibronectin type-III domains lie at 614-709 (PPEN…TPPA), 714-807 (NPQN…SGED), 809-914 (PDTA…TPEG), and 918-1015 (QPTF…LGEG). The disordered stretch occupies residues 693-716 (GRSQPSQPSDHHETPPAAPDRNPQ). N-linked (GlcNAc...) asparagine glycosylation is found at Asn-767, Asn-822, Asn-945, and Asn-1026. A helical membrane pass occupies residues 1083–1103 (FIGLMCAIALLTLLLLTVCFV). At 1104–1208 (KRNRGGKYSV…SSTATFPLRA (105 aa)) the chain is on the cytoplasmic side. The tract at residues 1131–1163 (ETFGEYSDSDEKPLKGSLRSLNRDMQPTESADS) is disordered. Phosphoserine occurs at positions 1147, 1160, and 1180. A compositionally biased stretch (polar residues) spans 1149-1161 (RSLNRDMQPTESA). The short motif at 1181–1185 (FIGAY) is the FIG[AQ]Y element. The segment at 1189–1208 (KEKGSVESNGSSTATFPLRA) is disordered. Over residues 1194 to 1208 (VESNGSSTATFPLRA) the composition is skewed to polar residues.

Belongs to the immunoglobulin superfamily. L1/neurofascin/NgCAM family. May interact with L1CAM. May interact with ITGB1/ITGA1 heterodimer and ITGB1/ITGA2 heterodimer as well as with ANK3. Cleavage by metalloprotease ADAM8 in the extracellular part generates 2 soluble forms (125 kDa and 165 kDa) in vitro and is inhibited by metalloprotease inhibitors. Cleaved by BACE1. In terms of processing, N-glycosylated. Contains N-linked oligosaccharides with a sulfated carbohydrate structure type HNK-1 (SO4-3-GlcUABeta1,3GalBeta1,4GlcNAc). Post-translationally, O-glycosylated. Expressed in the fetal and adult brain as well as in Schwann cell culture. Also detected in adult peripheral tissues.

It localises to the cell membrane. The protein resides in the secreted. Its subcellular location is the extracellular space. The protein localises to the extracellular matrix. Its function is as follows. Extracellular matrix and cell adhesion protein that plays a role in nervous system development and in synaptic plasticity. Both soluble and membranous forms promote neurite outgrowth of cerebellar and hippocampal neurons and suppress neuronal cell death. Plays a role in neuronal positioning of pyramidal neurons and in regulation of both the number of interneurons and the efficacy of GABAergic synapses. May play a role in regulating cell migration in nerve regeneration and cortical development. Potentiates integrin-dependent cell migration towards extracellular matrix proteins. Recruits ANK3 to the plasma membrane. The protein is Neural cell adhesion molecule L1-like protein (CHL1) of Homo sapiens (Human).